We begin with the raw amino-acid sequence, 291 residues long: MKIAVYGKGGIGKSTTSCNISVALARRGQKVLQIGCDPKHDSTFTLTGFLIPTIIDTLQSKDYHYEDIWPEDVIHKGYGGVDCVEAGGPPAGAGCGGYVVGETVKLLKELNAFYEYDIILFDVLGDVVCGGFAAPLNYADYCVIITDNGFDALFAANRITASIREKARTHPLRLAGLVGNRTSRRDLINKYVEACPMPVIEVLPIIEDIRVSRVKGKTLFEMVGSEPSLNYVCNYYLGIADQILSQPEGIVPKEIPDRELFSLLSDLYLNPIGGGGQKKKIQENFLGFTRI.

ATP-binding positions include 10-15 (GIGKST) and Lys-39. Ser-14 lines the Mg(2+) pocket. Residues Cys-95 and Cys-129 each contribute to the [4Fe-4S] cluster site. Position 180–181 (180–181 (NR)) interacts with ATP.

Belongs to the NifH/BchL/ChlL family. Homodimer. Protochlorophyllide reductase is composed of three subunits; ChlL, ChlN and ChlB. Requires [4Fe-4S] cluster as cofactor.

Its subcellular location is the plastid. The protein resides in the chloroplast. The enzyme catalyses chlorophyllide a + oxidized 2[4Fe-4S]-[ferredoxin] + 2 ADP + 2 phosphate = protochlorophyllide a + reduced 2[4Fe-4S]-[ferredoxin] + 2 ATP + 2 H2O. It functions in the pathway porphyrin-containing compound metabolism; chlorophyll biosynthesis (light-independent). Its function is as follows. Component of the dark-operative protochlorophyllide reductase (DPOR) that uses Mg-ATP and reduced ferredoxin to reduce ring D of protochlorophyllide (Pchlide) to form chlorophyllide a (Chlide). This reaction is light-independent. The L component serves as a unique electron donor to the NB-component of the complex, and binds Mg-ATP. This chain is Light-independent protochlorophyllide reductase iron-sulfur ATP-binding protein, found in Pinus koraiensis (Korean pine).